The following is a 365-amino-acid chain: NAD(P)H-quinone oxidoreductase subunit 1, chloroplastic (365 aa).

8 helical membrane-spanning segments follow: residues 27–47 (VWIFVPIFSLVLGIITGVLVI), 98–118 (FSIGPSIAVISILLSYSVIPF), 129–149 (IGIFLWIAISSIAPIGLLMSG), 165–185 (AAQSISYEIPLTLCVLSISLL), 203–223 (FWGWNLWRQPIGFIIFLISSL), 253–273 (FGLFYVASYINLLISSLFVTI), 302–322 (IFGTTIGIFITLAKTYLFLFI), and 345–365 (FLLPISLGNLLLTTSFQLFSL).

The protein belongs to the complex I subunit 1 family. NDH is composed of at least 16 different subunits, 5 of which are encoded in the nucleus.

It localises to the plastid. The protein localises to the chloroplast thylakoid membrane. The enzyme catalyses a plastoquinone + NADH + (n+1) H(+)(in) = a plastoquinol + NAD(+) + n H(+)(out). It catalyses the reaction a plastoquinone + NADPH + (n+1) H(+)(in) = a plastoquinol + NADP(+) + n H(+)(out). Functionally, NDH shuttles electrons from NAD(P)H:plastoquinone, via FMN and iron-sulfur (Fe-S) centers, to quinones in the photosynthetic chain and possibly in a chloroplast respiratory chain. The immediate electron acceptor for the enzyme in this species is believed to be plastoquinone. Couples the redox reaction to proton translocation, and thus conserves the redox energy in a proton gradient. The protein is NAD(P)H-quinone oxidoreductase subunit 1, chloroplastic of Arabis hirsuta (Hairy rock-cress).